Reading from the N-terminus, the 209-residue chain is Probable GTP-binding protein EngB (209 aa).

The 192-residue stretch at 12-203 (INLEIIFAGR…RDRLHEMKRD (192 aa)) folds into the EngB-type G domain. GTP contacts are provided by residues 20-27 (GRSNVGKS), 45-49 (GVTLR), 62-65 (DMPG), 142-145 (NKMD), and 179-181 (ISA). Mg(2+)-binding residues include Ser27 and Thr47.

It belongs to the TRAFAC class TrmE-Era-EngA-EngB-Septin-like GTPase superfamily. EngB GTPase family. Requires Mg(2+) as cofactor.

In terms of biological role, necessary for normal cell division and for the maintenance of normal septation. This is Probable GTP-binding protein EngB from Methanosarcina mazei (strain ATCC BAA-159 / DSM 3647 / Goe1 / Go1 / JCM 11833 / OCM 88) (Methanosarcina frisia).